A 369-amino-acid polypeptide reads, in one-letter code: Flagellar P-ring protein 2 (369 aa).

The first 24 residues, 1-24, serve as a signal peptide directing secretion; sequence MCAFAAILSLLSVLLMATSRSSDA.

The protein belongs to the FlgI family. The basal body constitutes a major portion of the flagellar organelle and consists of four rings (L,P,S, and M) mounted on a central rod.

The protein localises to the periplasm. Its subcellular location is the bacterial flagellum basal body. Assembles around the rod to form the L-ring and probably protects the motor/basal body from shearing forces during rotation. In Burkholderia thailandensis (strain ATCC 700388 / DSM 13276 / CCUG 48851 / CIP 106301 / E264), this protein is Flagellar P-ring protein 2.